The following is a 1021-amino-acid chain: Caspase recruitment domain-containing protein 10 (1021 aa).

The interval 1–24 (MQGRADAGEADEEAGAGSGSEAEE) is disordered. Ser18 carries the phosphoserine modification. The CARD domain maps to 23–115 (EEDALWERIE…EHFTLLTGQE (93 aa)). Positions 138–450 (TEVRRLREAR…LEAQLQRTQG (313 aa)) form a coiled coil. 3 disordered regions span residues 475 to 544 (EFPS…MSDI), 597 to 616 (SPPA…PGLG), and 790 to 809 (LVRP…QLPA). Basic and acidic residues-rich tracts occupy residues 495–508 (HTSE…KEIN) and 525–535 (RQREEDPEPPK).

In terms of assembly, CARD10 and BCL10 bind to each other by CARD-CARD interaction. They both participate in a complex with MALT1, where MALT1 binds to BCL10. Interacts with TMEM43; this interaction is essential for EGFR-mediated NF-kappa-B activation. In terms of tissue distribution, highly expressed in kidney, heart followed by brain, lung, liver, skeletal muscle and testis.

Scaffold protein that plays an important role in mediating the activation of NF-kappa-B via BCL10 or EGFR. The polypeptide is Caspase recruitment domain-containing protein 10 (Card10) (Mus musculus (Mouse)).